The chain runs to 1013 residues: EF-hand calcium-binding domain-containing protein 6 (1013 aa).

EF-hand domains follow at residues 20 to 55 (KNIKTVMKAFKLIDVNKTGLVRPQELRRVLETFCLK), 145 to 180 (KSYEKIEKALSAGDPCKGGYVSFNYLKIVLDTFIYQ), 251 to 286 (DRSASLKKALLIINTKPDGPITREEFRYILNCVAIK), 287 to 322 (LSDSEFKELMQILDPGDTGVVNTSMFIDLIEENCRM), and 352 to 387 (RNLQAFYNMLRSYDLGDTGLIGRNNFKKIMHVFCPF). The disordered stretch occupies residues 441 to 460 (QKDEQQQPDLSERTKPTEDK). 6 EF-hand domains span residues 482 to 517 (QQDPAFKKRFLDFSKEPNGKINVHDFRKILEDTGMP), 589 to 624 (ESFRDPYSAFFKTDVDRDGIINMHDLHRLLLHLLLN), 695 to 730 (NRWSDLSKNFLETDNEGNGILRRRDIKNALYGFDIP), 731 to 766 (LTPREFEKLWARYNTEGKGHITYQEFLQKLGINYSP), 812 to 847 (DLHQDISKAFTKIDKSKTNYISICKMQKVLEECGCS), and 917 to 952 (SSQLALSTAFSALDKEDTGFVKATEFGQVLKDFCYK). Ca(2+) is bound by residues Asp-602, Asp-604, Asp-606, and Asp-613. Thr-732 is modified (phosphothreonine).

Microtubule inner protein component of sperm flagellar doublet microtubules. Binds PARK7. Part of a ternary complex containing PARK7, EFCAB6/DJBP and AR.

It localises to the nucleus. The protein localises to the cytoplasm. It is found in the cytoskeleton. The protein resides in the flagellum axoneme. Functionally, negatively regulates the androgen receptor by recruiting histone deacetylase complex, and protein DJ-1 antagonizes this inhibition by abrogation of this complex. Microtubule inner protein (MIP) part of the dynein-decorated doublet microtubules (DMTs) in cilia axoneme, which is required for motile cilia beating. The sequence is that of EF-hand calcium-binding domain-containing protein 6 (EFCAB6) from Pongo abelii (Sumatran orangutan).